The primary structure comprises 44 residues: Small, acid-soluble spore protein P (44 aa).

A disordered region spans residues 1-44 (MSHTMGKNNREAKEKKGQPEPLSGSHKVKNRNHSRQKHHAHHDM). A compositionally biased stretch (basic and acidic residues) spans 8–18 (NNREAKEKKGQ). Residues 26-44 (HKVKNRNHSRQKHHAHHDM) are compositionally biased toward basic residues.

This sequence belongs to the SspP family.

Its subcellular location is the spore core. The polypeptide is Small, acid-soluble spore protein P (Bacillus cereus (strain ATCC 14579 / DSM 31 / CCUG 7414 / JCM 2152 / NBRC 15305 / NCIMB 9373 / NCTC 2599 / NRRL B-3711)).